The primary structure comprises 1969 residues: MSGNPDAFENDPGFPFLGMSREAKAASAARPFDSKKNCWIPDPEDGFVAAEIQSTTGDQVTVVTVKGNQITVKKDQCQEMNPPKFDKTEDMANLTFLNEASVLGNLKDRYKDLMIYTYSGLFCVVINPYKRLPIYSESVIKHFMGKRRNEMPPHLFAVSDEAYRNMVQDKENQSMLITGESGAGKTENTKKVISYFAIVGATQAAAGGKKEEGKKGGTLEEQIVQTNPVLEAFGNAKTVRNNNSSRFGKFIRTHFSGSGKLAGGDIEHYLLEKSRVVRQAPGERCYHIFYQIMSGNDASLRGKLKLNNDITYYHFCSQAELTIEGMDDKEEMRLTQEAFDIMGFEDQETMDLYRSTAGIMHMGEMKFKQRPREEQAEPDGEEDALNAAAMLGINAEEFLKALTKPRVRVGTEWVNKGQNLEQVSWAVSGLAKAIYARMFKWIINRCNKTLDAKEIERKHFIGVLDIAGFEIFDLNSFEQLWINFVNERLQQFFNHHMFVLEQEEYKREGIAWTFIDFGLDLQACIELIEKPLGIISILDEECIVPKATDMTYAQKLLDQHLGKHPNFQKPKPPKGKQGDAHFAIVHYAGTVRYNANNFLEKNKDPLNDTAVALLKHSVDNNLMLDIWQDYQTQEEAAEAAKAGQSGGGKRGKSSSFATVSMIYRESLNNLMNMLYQTHPHFIRCIIPNEKKASGVIDSALVLNQLTCNGVLEGIRICRKGFPNRMLYPDFKHRYAILAADAAKDSDPKKASVGILDKIANDGNLTDEEFKIGETKIFFKAGVLAKLEDLRDEILSRIVTMFQSRIRSYLAKAEVRRRYEQQTGLLIVQRNVRAWCTLRTWEWFKLFGKVKPMLKAGKEQEAMGELAEKIQKLEEAVQRGEIARSQLETQVADLVEEKNALFLSLETEKANLADAEERNEKLNQLKATLESKLTDITGQLEDMQERHEDLTRQKKKTEQELSDTKKHVQDLELTLRKAEQEKQSRDHQIRSLQDEMANQDESVAKLNKEKKHQEESNRKLNEDLQSEEDKVNHLEKIRNKLEQQMDELEETIDREKRSRSDIEKSKRKVEGDLKVAQENIDEITKQKQDVENTLKRKEDDLHHASTKLAEEQALAAKLQRQIKELQARIAELEEELESERNSRQKADRTRNELQRELEEISERLEQQGGFSAAQLEANKKREAEIAKLRREKEEDALNHETAVSSLRKRQVDAVAELTEQLETLQKLKAKGDAERAKLQRDLEEAQHATDSEVRARQEVEKSYKTIEVQFSELQTKADEQSRQLQDFAALKNRLNNENGDLNRTLEEMDNQVNSLHRLKSTLQSQLDETRRNFEEESRERQALAATAKNLEHENEILREHLDEEAESKADLTRQISKLNAEIQQWKARFDSEGLNKLEEIEAAKKALQLKVQELSDTNEGLFAKIASQEKVRHKLMQDLDDAQSDVEKAAAQVAYYEKHRRQFEKIVEEWKKKTDDLASELDAAQRDNRQLSTDLFKAKTANDELAEYLDSTRRENKSLAQEVKDLTDQLGEGGRSVAELQKIVRRLEVEKEELQKALDEAEAALEAEEAKVLRAQIEVSQIRSEIEKRIQEKEEEFENTRRNHQRALESMQATLEAETKQKEEALRIKKKLESDINDLEIALDHANRANADAQKTIKKYMETVRELQVQIEEEQRQKDELREQFLASEKRNGILQAEKDELAQQAEAAERARRNAEADCIELREQNNDLSNQVSSLTGWRRKLEGELLAVHAELEELVTELKNAQEQGQKASADAARLAEELRQEQEHSMHIERIRKGLELQIKEMQIRLDDAENAALKGGKKIIAQLEARIRAIEQELDGEQRRHQDTEKNWRKAERRVKEVEFQVIEEKKNEERLTELVDKLQTKLKIFKRQVEEAEEVAASNLNKYKVLQAQFEQADERAEIAENALSKMRNKIRASASVIPPDGFPLAQSPSSALVRSASNARFL.

The Myosin N-terminal SH3-like domain occupies 33–82; sequence DSKKNCWIPDPEDGFVAAEIQSTTGDQVTVVTVKGNQITVKKDQCQEMNP. Positions 86–791 constitute a Myosin motor domain; sequence DKTEDMANLT…VLAKLEDLRD (706 aa). K130 carries the post-translational modification N6,N6,N6-trimethyllysine. 179-186 is a binding site for ATP; the sequence is GESGAGKT. 2 actin-binding regions span residues 667–689 and 770–784; these read LNNL…IPNE and KIGE…GVLA. Positions 794–823 constitute an IQ domain; the sequence is LSRIVTMFQSRIRSYLAKAEVRRRYEQQTG. Residues 853 to 1941 adopt a coiled-coil conformation; it reads LKAGKEQEAM…KMRNKIRASA (1089 aa). 3 disordered regions span residues 943–967, 993–1029, and 1134–1153; these read QERH…KKHV, DEMA…EEDK, and ELES…NELQ. Basic and acidic residues-rich tracts occupy residues 1001–1029 and 1137–1153; these read SVAK…EEDK and SERN…NELQ.

It belongs to the TRAFAC class myosin-kinesin ATPase superfamily. Myosin family. Muscle myosin is a hexameric protein that consists of 2 heavy chain subunits (MHC), 2 alkali light chain subunits (MLC) and 2 regulatory light chain subunits (MLC-2).

Its subcellular location is the cytoplasm. It is found in the myofibril. It localises to the sarcomere. The protein resides in the a band. Essential for muscle contraction. Involved in ovulation likely by regulating the contraction of gonadal myoepithelial sheath cells. This Caenorhabditis briggsae protein is Myosin-3.